The following is a 102-amino-acid chain: Salivary thrombin inhibitor anophelin (102 aa).

An N-terminal signal peptide occupies residues 1 to 21 (MATKLIVIAFLCAALIAVVQS). Positions 25–102 (YAQGEEPTYD…SDSSSESTEH (78 aa)) are disordered. The span at 59–69 (SQLTEYANTAQ) shows a compositional bias: polar residues. The blocks active site cleft of host thrombin in a reverse direction compared to substrates stretch occupies residues 70-73 (DPGR). A compositionally biased stretch (polar residues) spans 80-90 (QANSNNGDQLP). A compositionally biased stretch (low complexity) spans 91 to 102 (SQSDSSSESTEH).

It belongs to the anophelin family. In terms of assembly, interacts with human F2 (thrombin); the interaction results in thrombin inhibition.

The protein resides in the secreted. Salivary protein with anticoagulant activity that inhibits host thrombin (F2). In Anopheles funestus (African malaria mosquito), this protein is Salivary thrombin inhibitor anophelin.